A 505-amino-acid polypeptide reads, in one-letter code: ATP synthase subunit alpha (505 aa).

170–177 (GDRQTGKT) serves as a coordination point for ATP.

It belongs to the ATPase alpha/beta chains family. In terms of assembly, F-type ATPases have 2 components, CF(1) - the catalytic core - and CF(0) - the membrane proton channel. CF(1) has five subunits: alpha(3), beta(3), gamma(1), delta(1), epsilon(1). CF(0) has four main subunits: a(1), b(1), b'(1) and c(9-12).

It localises to the cellular thylakoid membrane. It carries out the reaction ATP + H2O + 4 H(+)(in) = ADP + phosphate + 5 H(+)(out). Produces ATP from ADP in the presence of a proton gradient across the membrane. The alpha chain is a regulatory subunit. The sequence is that of ATP synthase subunit alpha from Synechococcus sp. (strain RCC307).